A 172-amino-acid chain; its full sequence is MLPMITGFMNYGQQTLRAARYIGQGFMITLSHTNRLPVTIQYPYEKLITSERFRGRIHFEFDKCIACEVCVRVCPIDLPVVDWKLETNIRKKRLLNYSIDFGICIFCGNCVEYCPTNCLSMTEEYEFSTYDRHELNYNQIALGRLPMSVIDDYTVRTILNSPQTKNGVNPLI.

4Fe-4S ferredoxin-type domains are found at residues 55–84 (GRIHFEFDKCIACEVCVRVCPIDLPVVDWK) and 95–124 (LNYSIDFGICIFCGNCVEYCPTNCLSMTEE). Residues cysteine 64, cysteine 67, cysteine 70, cysteine 74, cysteine 104, cysteine 107, cysteine 110, and cysteine 114 each contribute to the [4Fe-4S] cluster site.

This sequence belongs to the complex I 23 kDa subunit family. NDH is composed of at least 16 different subunits, 5 of which are encoded in the nucleus. Requires [4Fe-4S] cluster as cofactor.

The protein localises to the plastid. It localises to the chloroplast thylakoid membrane. The catalysed reaction is a plastoquinone + NADH + (n+1) H(+)(in) = a plastoquinol + NAD(+) + n H(+)(out). It carries out the reaction a plastoquinone + NADPH + (n+1) H(+)(in) = a plastoquinol + NADP(+) + n H(+)(out). Its function is as follows. NDH shuttles electrons from NAD(P)H:plastoquinone, via FMN and iron-sulfur (Fe-S) centers, to quinones in the photosynthetic chain and possibly in a chloroplast respiratory chain. The immediate electron acceptor for the enzyme in this species is believed to be plastoquinone. Couples the redox reaction to proton translocation, and thus conserves the redox energy in a proton gradient. The chain is NAD(P)H-quinone oxidoreductase subunit I, chloroplastic from Capsella bursa-pastoris (Shepherd's purse).